Consider the following 514-residue polypeptide: Cholesterol side-chain cleavage enzyme, mitochondrial (514 aa).

Residues 1-39 (MMVSWSVCRSSLALPACGLPSARHNSSMPVVRQALSPDN) constitute a mitochondrion transit peptide. Cys458 contacts heme.

It belongs to the cytochrome P450 family. Requires heme as cofactor. As to expression, in the ovary, not found in early vitellogenic follicles, barely detected in postvitellogenic follicles and abundant in post-ovulatory follicles.

It localises to the mitochondrion inner membrane. The enzyme catalyses 6 reduced [adrenodoxin] + cholesterol + 3 O2 + 6 H(+) = 4-methylpentanal + pregnenolone + 6 oxidized [adrenodoxin] + 4 H2O. Its pathway is lipid metabolism; C21-steroid hormone metabolism. Catalyzes the side-chain cleavage reaction of cholesterol to pregnenolone, the precursor of most steroid hormones. The protein is Cholesterol side-chain cleavage enzyme, mitochondrial (cyp11a1) of Oncorhynchus mykiss (Rainbow trout).